We begin with the raw amino-acid sequence, 91 residues long: Beta-microseminoprotein (91 aa).

Cystine bridges form between Cys2/Cys54, Cys22/Cys46, Cys41/Cys75, Cys44/Cys53, and Cys68/Cys88.

As to expression, expressed in ciliated epithelium of nidamental gland and in secretory-like cells in accessory nidamental gland (at protein level). Expressed in ovary, nidamental gland and accessory nidamental gland.

It localises to the secreted. Its function is as follows. Acts as a pheromone. Triggers aggressive behaviors in males such as fin beating, lunging and grabbing. These behaviors form part of the competition for fertile females. This Doryteuthis pealeii (Longfin inshore squid) protein is Beta-microseminoprotein.